Reading from the N-terminus, the 197-residue chain is Probable GTP-binding protein EngB (197 aa).

Residues 22–195 (ELPEVALAGR…WKAIYALITE (174 aa)) enclose the EngB-type G domain. Residues 30–37 (GRSNVGKS), 57–61 (GKTQT), 75–78 (DVPG), 142–145 (TKLD), and 174–176 (FSA) contribute to the GTP site. Positions 37 and 59 each coordinate Mg(2+).

It belongs to the TRAFAC class TrmE-Era-EngA-EngB-Septin-like GTPase superfamily. EngB GTPase family. Mg(2+) serves as cofactor.

In terms of biological role, necessary for normal cell division and for the maintenance of normal septation. The protein is Probable GTP-binding protein EngB of Exiguobacterium sp. (strain ATCC BAA-1283 / AT1b).